We begin with the raw amino-acid sequence, 123 residues long: RNA silencing suppressor (123 aa).

Residues 52-55 (KRRR) are basic. The segment at 62 to 83 (CVRCFRVNPGFYFTKRCDGITC) adopts a C4-type zinc-finger fold.

It belongs to the carlaviruses nucleic acid-binding protein family.

Suppressor of viral-induced RNA silencing. The potential mechanism of action is based on sequestering siRNAs. The polypeptide is RNA silencing suppressor (Populus balsamifera (Balsam poplar)).